Reading from the N-terminus, the 89-residue chain is YcgL domain-containing protein Asuc_1390 (89 aa).

One can recognise a YcgL domain in the interval 1–85 (MLCAIYKSKK…KDDWLFTIEK (85 aa)).

The sequence is that of YcgL domain-containing protein Asuc_1390 from Actinobacillus succinogenes (strain ATCC 55618 / DSM 22257 / CCUG 43843 / 130Z).